Here is a 1339-residue protein sequence, read N- to C-terminus: Receptor tyrosine-protein kinase erbB-3 (1339 aa).

The signal sequence occupies residues 1–19 (MSAIGTLQVLGFLLSLARG). At 20-641 (SEMGNSQAVC…QAEVLMSKPH (622 aa)) the chain is on the extracellular side. The N-linked (GlcNAc...) asparagine glycan is linked to N126. Intrachain disulfides connect C186-C194, C190-C202, C210-C218, C214-C226, C227-C235, C231-C243, C246-C255, C259-C286, C290-C301, C305-C320, and C323-C327. N-linked (GlcNAc...) asparagine glycosylation is present at N250. 5 N-linked (GlcNAc...) asparagine glycosylation sites follow: N353, N408, N414, N437, and N469. Cystine bridges form between C500/C509, C504/C517, C520/C529, C533/C549, C552/C565, C556/C573, C576/C585, C589/C610, C613/C621, and C617/C629. An N-linked (GlcNAc...) asparagine glycan is attached at N522. N566 carries N-linked (GlcNAc...) asparagine glycosylation. N616 carries an N-linked (GlcNAc...) asparagine glycan. A helical membrane pass occupies residues 642-662 (LVIAVTVGLTVIFLILGGSFL). Over 663 to 1339 (YWRGRRIQNK…LFPKANAQRI (677 aa)) the chain is Cytoplasmic. Position 684 is a phosphoserine (S684). The region spanning 707-964 (LRKLKVLGSG…TFKELANEFT (258 aa)) is the Protein kinase domain. Residues 713 to 721 (LGSGVFGTV), K740, 786 to 788 (QYL), and 832 to 837 (DLALRN) each bind ATP. The Proton acceptor role is filled by D832. S980 bears the Phosphoserine mark. 3 disordered regions span residues 1028-1052 (LSLP…SGYM), 1077-1156 (RPIS…GNGY), and 1181-1212 (SVLG…PRPG). Acidic residues predominate over residues 1185-1195 (TEEEDEDEEYE).

This sequence belongs to the protein kinase superfamily. Tyr protein kinase family. EGF receptor subfamily. In terms of assembly, monomer and homodimer. Heterodimer with each of the other ERBB receptors (Potential). Interacts with CSPG5, PA2G4, GRB7 and MUC1. Interacts with MYOC. Found in a ternary complex with NRG1 and ITGAV:ITGB3 or ITGA6:ITGB4. Post-translationally, autophosphorylated. Ligand-binding increases phosphorylation on tyrosine residues and promotes its association with the p85 subunit of phosphatidylinositol 3-kinase. In terms of tissue distribution, in the muscle, expression localizes to the synaptic sites of muscle fibers.

The protein resides in the membrane. It catalyses the reaction L-tyrosyl-[protein] + ATP = O-phospho-L-tyrosyl-[protein] + ADP + H(+). Tyrosine-protein kinase that plays an essential role as cell surface receptor for neuregulins. Binds to neuregulin-1 (NRG1) and is activated by it; ligand-binding increases phosphorylation on tyrosine residues and promotes its association with the p85 subunit of phosphatidylinositol 3-kinase. May also be activated by CSPG5. Involved in the regulation of myeloid cell differentiation. The sequence is that of Receptor tyrosine-protein kinase erbB-3 (Erbb3) from Mus musculus (Mouse).